Reading from the N-terminus, the 207-residue chain is 2,3-bisphosphoglycerate-dependent phosphoglycerate mutase (207 aa).

Substrate-binding positions include 9-16 (RHGQSDWN), 22-23 (TG), R61, 88-91 (ERDY), K99, 115-116 (RR), and 159-160 (GN). H10 functions as the Tele-phosphohistidine intermediate in the catalytic mechanism. The Proton donor/acceptor role is filled by E88.

Belongs to the phosphoglycerate mutase family. BPG-dependent PGAM subfamily. As to quaternary structure, homodimer.

It catalyses the reaction (2R)-2-phosphoglycerate = (2R)-3-phosphoglycerate. It functions in the pathway carbohydrate degradation; glycolysis; pyruvate from D-glyceraldehyde 3-phosphate: step 3/5. In terms of biological role, catalyzes the interconversion of 2-phosphoglycerate and 3-phosphoglycerate. The sequence is that of 2,3-bisphosphoglycerate-dependent phosphoglycerate mutase from Beijerinckia indica subsp. indica (strain ATCC 9039 / DSM 1715 / NCIMB 8712).